Consider the following 149-residue polypeptide: Glucosamine 6-phosphate N-acetyltransferase (149 aa).

Residues 7 to 149 enclose the N-acetyltransferase domain; that stretch reads YTFRKLKLTD…DGGVEMVCRF (143 aa). Substrate-binding positions include Thr29, 76–79, and 88–90; these read KLIH and EDI. Residues 90–92 and 98–103 each bind acetyl-CoA; these read ISV and GKKLGY. Substrate-binding positions include 119-120 and Asp124; that span reads YK. 133 to 135 lines the acetyl-CoA pocket; it reads YEK. Residue Arg148 participates in substrate binding.

It belongs to the acetyltransferase family. GNA1 subfamily.

The catalysed reaction is D-glucosamine 6-phosphate + acetyl-CoA = N-acetyl-D-glucosamine 6-phosphate + CoA + H(+). The protein operates within nucleotide-sugar biosynthesis; UDP-N-acetyl-alpha-D-glucosamine biosynthesis; N-acetyl-alpha-D-glucosamine 1-phosphate from alpha-D-glucosamine 6-phosphate (route I): step 1/2. This chain is Glucosamine 6-phosphate N-acetyltransferase (GNA1), found in Candida albicans (Yeast).